The following is a 262-amino-acid chain: MKAKILIDAYEAFCPLDLSMEGDVKGLQMGSLDKDIRKVMITLDIRESTVAEAIKNEVDLIITKHAPIFKPLKDLVSSPQRDILLDLVKHDISVYVSHTNIDIVPGGLNDWFCDLLEIKEATYLSETKEGFGIGRIGTVKEQALEELASKVKRVFDLDTVRLIRYDKENPLISKIAICGGSGGEFYQDAVQKGADVYITGDIYYHTAQEMLTEGLFAVDPGHHIEVLFTEKLKEKLQGWKEENGWDVSIISSKASTNPFSHL.

A divalent metal cation contacts are provided by His-65, Asp-102, His-222, and Glu-225.

This sequence belongs to the GTP cyclohydrolase I type 2/NIF3 family. As to quaternary structure, homohexamer.

This is GTP cyclohydrolase 1 type 2 homolog from Streptococcus pyogenes serotype M6 (strain ATCC BAA-946 / MGAS10394).